The primary structure comprises 439 residues: 23S rRNA (uracil(1939)-C(5))-methyltransferase RlmD (439 aa).

The TRAM domain maps to 10–69 (KTQLNTRHQAVQVERLDHHGAGIAYLKKKPLFIDGALPGEEVVTQLVEEKSKFARGKLIK). Residues Cys82, Cys88, Cys91, and Cys169 each contribute to the [4Fe-4S] cluster site. Residues Gln272, Phe301, Asn306, Glu322, Asn349, and Asp370 each contribute to the S-adenosyl-L-methionine site. The active-site Nucleophile is the Cys396.

This sequence belongs to the class I-like SAM-binding methyltransferase superfamily. RNA M5U methyltransferase family. RlmD subfamily.

The enzyme catalyses uridine(1939) in 23S rRNA + S-adenosyl-L-methionine = 5-methyluridine(1939) in 23S rRNA + S-adenosyl-L-homocysteine + H(+). Its function is as follows. Catalyzes the formation of 5-methyl-uridine at position 1939 (m5U1939) in 23S rRNA. The chain is 23S rRNA (uracil(1939)-C(5))-methyltransferase RlmD from Vibrio campbellii (strain ATCC BAA-1116).